Consider the following 31-residue polypeptide: Photosystem II reaction center protein T (31 aa).

A helical transmembrane segment spans residues 3 to 23; sequence SVAYIVVLTMALAVLFFAIAF.

It belongs to the PsbT family. PSII is composed of 1 copy each of membrane proteins PsbA, PsbB, PsbC, PsbD, PsbE, PsbF, PsbH, PsbI, PsbJ, PsbK, PsbL, PsbM, PsbT, PsbX, PsbY, PsbZ, Psb30/Ycf12, peripheral proteins PsbO, CyanoQ (PsbQ), PsbU, PsbV and a large number of cofactors. It forms dimeric complexes.

It is found in the cellular thylakoid membrane. Its function is as follows. Found at the monomer-monomer interface of the photosystem II (PS II) dimer, plays a role in assembly and dimerization of PSII. PSII is a light-driven water plastoquinone oxidoreductase, using light energy to abstract electrons from H(2)O, generating a proton gradient subsequently used for ATP formation. This Crocosphaera subtropica (strain ATCC 51142 / BH68) (Cyanothece sp. (strain ATCC 51142)) protein is Photosystem II reaction center protein T.